A 236-amino-acid chain; its full sequence is Phosphoribosylaminoimidazole-succinocarboxamide synthase (236 aa).

This sequence belongs to the SAICAR synthetase family.

It catalyses the reaction 5-amino-1-(5-phospho-D-ribosyl)imidazole-4-carboxylate + L-aspartate + ATP = (2S)-2-[5-amino-1-(5-phospho-beta-D-ribosyl)imidazole-4-carboxamido]succinate + ADP + phosphate + 2 H(+). It functions in the pathway purine metabolism; IMP biosynthesis via de novo pathway; 5-amino-1-(5-phospho-D-ribosyl)imidazole-4-carboxamide from 5-amino-1-(5-phospho-D-ribosyl)imidazole-4-carboxylate: step 1/2. This is Phosphoribosylaminoimidazole-succinocarboxamide synthase from Hahella chejuensis (strain KCTC 2396).